Here is a 495-residue protein sequence, read N- to C-terminus: UDP-N-acetylmuramate--L-alanine ligase (495 aa).

120–126 is a binding site for ATP; it reads GSHGKTT.

It belongs to the MurCDEF family.

It is found in the cytoplasm. The enzyme catalyses UDP-N-acetyl-alpha-D-muramate + L-alanine + ATP = UDP-N-acetyl-alpha-D-muramoyl-L-alanine + ADP + phosphate + H(+). The protein operates within cell wall biogenesis; peptidoglycan biosynthesis. Functionally, cell wall formation. The polypeptide is UDP-N-acetylmuramate--L-alanine ligase (Rickettsia prowazekii (strain Madrid E)).